The primary structure comprises 456 residues: Bifunctional protein GlmU (456 aa).

Residues 1–229 (MLNNAMSVVI…LSEVEGVNNR (229 aa)) form a pyrophosphorylase region. UDP-N-acetyl-alpha-D-glucosamine contacts are provided by residues 11–14 (LAAG), Lys-25, Gln-76, 81–82 (GT), 103–105 (YGD), Gly-140, Glu-154, Asn-169, and Asn-227. Asp-105 serves as a coordination point for Mg(2+). Asn-227 contacts Mg(2+). A linker region spans residues 230–250 (LQLSRLERVYQSEQAEKLLLA). Residues 251–456 (GVMLRDPARF…EGWRRPVKKK (206 aa)) are N-acetyltransferase. 2 residues coordinate UDP-N-acetyl-alpha-D-glucosamine: Arg-333 and Lys-351. His-363 (proton acceptor) is an active-site residue. 2 residues coordinate UDP-N-acetyl-alpha-D-glucosamine: Tyr-366 and Asn-377. Residues Ala-380, 386–387 (NY), Ser-405, Ala-423, and Arg-440 each bind acetyl-CoA.

The protein in the N-terminal section; belongs to the N-acetylglucosamine-1-phosphate uridyltransferase family. It in the C-terminal section; belongs to the transferase hexapeptide repeat family. In terms of assembly, homotrimer. The cofactor is Mg(2+).

It localises to the cytoplasm. It catalyses the reaction alpha-D-glucosamine 1-phosphate + acetyl-CoA = N-acetyl-alpha-D-glucosamine 1-phosphate + CoA + H(+). The catalysed reaction is N-acetyl-alpha-D-glucosamine 1-phosphate + UTP + H(+) = UDP-N-acetyl-alpha-D-glucosamine + diphosphate. It functions in the pathway nucleotide-sugar biosynthesis; UDP-N-acetyl-alpha-D-glucosamine biosynthesis; N-acetyl-alpha-D-glucosamine 1-phosphate from alpha-D-glucosamine 6-phosphate (route II): step 2/2. The protein operates within nucleotide-sugar biosynthesis; UDP-N-acetyl-alpha-D-glucosamine biosynthesis; UDP-N-acetyl-alpha-D-glucosamine from N-acetyl-alpha-D-glucosamine 1-phosphate: step 1/1. It participates in bacterial outer membrane biogenesis; LPS lipid A biosynthesis. In terms of biological role, catalyzes the last two sequential reactions in the de novo biosynthetic pathway for UDP-N-acetylglucosamine (UDP-GlcNAc). The C-terminal domain catalyzes the transfer of acetyl group from acetyl coenzyme A to glucosamine-1-phosphate (GlcN-1-P) to produce N-acetylglucosamine-1-phosphate (GlcNAc-1-P), which is converted into UDP-GlcNAc by the transfer of uridine 5-monophosphate (from uridine 5-triphosphate), a reaction catalyzed by the N-terminal domain. The chain is Bifunctional protein GlmU from Escherichia coli O81 (strain ED1a).